The chain runs to 122 residues: MARIAGIDLPKNKRIVIALTYIYGIGNSTAEKILEATNVDPNTRTDNLTEADVSHLRDEIDRNIKVEGDLRREISMNIKRLMDLGCYRGLRHRKGLPVRGQRTKTNARTRKGPARTVAGKKK.

The interval 97–122 (PVRGQRTKTNARTRKGPARTVAGKKK) is disordered.

The protein belongs to the universal ribosomal protein uS13 family. As to quaternary structure, part of the 30S ribosomal subunit. Forms a loose heterodimer with protein S19. Forms two bridges to the 50S subunit in the 70S ribosome.

Its function is as follows. Located at the top of the head of the 30S subunit, it contacts several helices of the 16S rRNA. In the 70S ribosome it contacts the 23S rRNA (bridge B1a) and protein L5 of the 50S subunit (bridge B1b), connecting the 2 subunits; these bridges are implicated in subunit movement. Contacts the tRNAs in the A and P-sites. The chain is Small ribosomal subunit protein uS13 from Pelobacter propionicus (strain DSM 2379 / NBRC 103807 / OttBd1).